The sequence spans 565 residues: Nephronectin (565 aa).

Residues 1 to 19 form the signal peptide; the sequence is MDFLLALVLVSSLYLQAAA. The EGF-like 1 domain occupies 52-87; it reads SWGQCQPVCQPRCKHGECIGPNKCKCHPGYAGKTCN. Cystine bridges form between Cys56/Cys69, Cys60/Cys75, Cys77/Cys86, Cys93/Cys104, Cys100/Cys113, and Cys115/Cys127. In terms of domain architecture, EGF-like 2; calcium-binding spans 89–128; the sequence is DLNECGLKPRPCKHRCMNTYGSYKCYCLNGYMLMPDGSCS. Residues 132-168 form the EGF-like 3 domain; that stretch reads TCSMANCQYGCDVVKGQIRCQCPSPGLQLAPDGRTCV. Residues 169–213 form the EGF-like 4; calcium-binding domain; that stretch reads DVDECATGRASCPRFRQCVNTFGSYICKCHKGFDLMYIGGKYQCH. 6 cysteine pairs are disulfide-bonded: Cys173–Cys186, Cys180–Cys195, Cys197–Cys212, Cys218–Cys231, Cys225–Cys240, and Cys242–Cys253. The EGF-like 5; calcium-binding domain occupies 214 to 254; it reads DIDECSLGQYQCSSFARCYNIRGSYKCKCKEGYQGDGLTCV. A disordered region spans residues 301–389; that stretch reads YIPPIITNRP…KPRGDVFIPR (89 aa). Positions 304–316 are enriched in low complexity; sequence PIITNRPTSKPTT. Pro residues predominate over residues 317 to 347; it reads RPTPKPTPIPTPPPPPPLPTELRTPLPPTTP. Positions 382–384 match the Integrin interaction motif; the sequence is RGD. One can recognise an MAM domain in the interval 420-563; the sequence is HSCNFDHGLC…VSLKKGHCSE (144 aa).

This sequence belongs to the nephronectin family. In terms of assembly, homodimer and homotrimer. Expressed in kidney and lung and to a lower extent in brain, pregnant uterus, placenta, thyroid gland and blood vessels.

The protein resides in the secreted. The protein localises to the extracellular space. It localises to the extracellular matrix. Functionally, functional ligand of integrin alpha-8/beta-1 in kidney development. Regulates the expression of GDNF with integrin alpha-8/beta-1 which is essential for kidney development. May also play a role in the development and function of various tissues, regulating cell adhesion, spreading and survival through the binding of several integrins. The polypeptide is Nephronectin (NPNT) (Homo sapiens (Human)).